A 106-amino-acid polypeptide reads, in one-letter code: Large ribosomal subunit protein uL24 (106 aa).

This sequence belongs to the universal ribosomal protein uL24 family. As to quaternary structure, part of the 50S ribosomal subunit.

Functionally, one of two assembly initiator proteins, it binds directly to the 5'-end of the 23S rRNA, where it nucleates assembly of the 50S subunit. In terms of biological role, one of the proteins that surrounds the polypeptide exit tunnel on the outside of the subunit. The sequence is that of Large ribosomal subunit protein uL24 from Orientia tsutsugamushi (strain Boryong) (Rickettsia tsutsugamushi).